Reading from the N-terminus, the 143-residue chain is Large ribosomal subunit protein uL11 (143 aa).

It belongs to the universal ribosomal protein uL11 family. In terms of assembly, part of the ribosomal stalk of the 50S ribosomal subunit. Interacts with L10 and the large rRNA to form the base of the stalk. L10 forms an elongated spine to which L12 dimers bind in a sequential fashion forming a multimeric L10(L12)X complex. In terms of processing, one or more lysine residues are methylated.

Functionally, forms part of the ribosomal stalk which helps the ribosome interact with GTP-bound translation factors. This is Large ribosomal subunit protein uL11 from Pseudomonas fluorescens (strain Pf0-1).